A 271-amino-acid polypeptide reads, in one-letter code: Phosphate import ATP-binding protein PstB 1 (271 aa).

An ABC transporter domain is found at 24-266 (MIGKDVSVYY…PDDPRTQDYI (243 aa)). 56–63 (GPSGCGKS) is a binding site for ATP.

This sequence belongs to the ABC transporter superfamily. Phosphate importer (TC 3.A.1.7) family. In terms of assembly, the complex is composed of two ATP-binding proteins (PstB), two transmembrane proteins (PstC and PstA) and a solute-binding protein (PstS).

The protein localises to the cell inner membrane. It carries out the reaction phosphate(out) + ATP + H2O = ADP + 2 phosphate(in) + H(+). In terms of biological role, part of the ABC transporter complex PstSACB involved in phosphate import. Responsible for energy coupling to the transport system. The protein is Phosphate import ATP-binding protein PstB 1 of Rhizobium johnstonii (strain DSM 114642 / LMG 32736 / 3841) (Rhizobium leguminosarum bv. viciae).